A 530-amino-acid polypeptide reads, in one-letter code: Bifunctional purine biosynthesis protein PurH (530 aa).

Residues 2–150 (TDHPRRVTRA…KNHDDVAVVV (149 aa)) enclose the MGS-like domain.

The protein belongs to the PurH family.

The catalysed reaction is (6R)-10-formyltetrahydrofolate + 5-amino-1-(5-phospho-beta-D-ribosyl)imidazole-4-carboxamide = 5-formamido-1-(5-phospho-D-ribosyl)imidazole-4-carboxamide + (6S)-5,6,7,8-tetrahydrofolate. The enzyme catalyses IMP + H2O = 5-formamido-1-(5-phospho-D-ribosyl)imidazole-4-carboxamide. It functions in the pathway purine metabolism; IMP biosynthesis via de novo pathway; 5-formamido-1-(5-phospho-D-ribosyl)imidazole-4-carboxamide from 5-amino-1-(5-phospho-D-ribosyl)imidazole-4-carboxamide (10-formyl THF route): step 1/1. The protein operates within purine metabolism; IMP biosynthesis via de novo pathway; IMP from 5-formamido-1-(5-phospho-D-ribosyl)imidazole-4-carboxamide: step 1/1. This is Bifunctional purine biosynthesis protein PurH from Bradyrhizobium diazoefficiens (strain JCM 10833 / BCRC 13528 / IAM 13628 / NBRC 14792 / USDA 110).